A 351-amino-acid chain; its full sequence is Dihydroorotate dehydrogenase (quinone) (351 aa).

FMN is bound by residues 61–65 (AGLDK) and T85. A substrate-binding site is contributed by K65. Residue 110–114 (NRMGF) coordinates substrate. FMN contacts are provided by N139 and N172. N172 lines the substrate pocket. Catalysis depends on S175, which acts as the Nucleophile. N177 contributes to the substrate binding site. FMN-binding residues include K217 and T245. Substrate is bound at residue 246–247 (NT). Residues G268, G297, and 318 to 319 (YS) contribute to the FMN site.

The protein belongs to the dihydroorotate dehydrogenase family. Type 2 subfamily. As to quaternary structure, monomer. It depends on FMN as a cofactor.

It localises to the cell membrane. It carries out the reaction (S)-dihydroorotate + a quinone = orotate + a quinol. It functions in the pathway pyrimidine metabolism; UMP biosynthesis via de novo pathway; orotate from (S)-dihydroorotate (quinone route): step 1/1. Functionally, catalyzes the conversion of dihydroorotate to orotate with quinone as electron acceptor. In Xanthomonas oryzae pv. oryzae (strain MAFF 311018), this protein is Dihydroorotate dehydrogenase (quinone).